The following is a 277-amino-acid chain: 4-hydroxy-tetrahydrodipicolinate reductase (277 aa).

Residues 11 to 16 and 110 to 112 contribute to the NAD(+) site; these read GALGRM and GTT. H166 (proton donor/acceptor) is an active-site residue. H167 serves as a coordination point for (S)-2,3,4,5-tetrahydrodipicolinate. K170 acts as the Proton donor in catalysis. Residue 176 to 177 coordinates (S)-2,3,4,5-tetrahydrodipicolinate; the sequence is GT.

Belongs to the DapB family.

Its subcellular location is the cytoplasm. It carries out the reaction (S)-2,3,4,5-tetrahydrodipicolinate + NAD(+) + H2O = (2S,4S)-4-hydroxy-2,3,4,5-tetrahydrodipicolinate + NADH + H(+). The enzyme catalyses (S)-2,3,4,5-tetrahydrodipicolinate + NADP(+) + H2O = (2S,4S)-4-hydroxy-2,3,4,5-tetrahydrodipicolinate + NADPH + H(+). It participates in amino-acid biosynthesis; L-lysine biosynthesis via DAP pathway; (S)-tetrahydrodipicolinate from L-aspartate: step 4/4. Catalyzes the conversion of 4-hydroxy-tetrahydrodipicolinate (HTPA) to tetrahydrodipicolinate. This Parasynechococcus marenigrum (strain WH8102) protein is 4-hydroxy-tetrahydrodipicolinate reductase.